Here is a 194-residue protein sequence, read N- to C-terminus: MNARIAEVQRKTKETEIKMVLNIDGDGEYKISTGIGFFDHMLQLFCHHGKFNIQVEAKGDLHIDDHHTIEDVGIVLGQAFLKAISDKRGIKRYSHIILPMDEALIMVAIDISGRPYLAFDVDFRLPKLGEMNSQMVVEFFRAFVSSAKVTLHVKKISGENDHHVCEAIFKAFGRVLKDACTIVDDKIPSSKGVL.

It belongs to the imidazoleglycerol-phosphate dehydratase family.

Its subcellular location is the cytoplasm. It carries out the reaction D-erythro-1-(imidazol-4-yl)glycerol 3-phosphate = 3-(imidazol-4-yl)-2-oxopropyl phosphate + H2O. Its pathway is amino-acid biosynthesis; L-histidine biosynthesis; L-histidine from 5-phospho-alpha-D-ribose 1-diphosphate: step 6/9. This chain is Imidazoleglycerol-phosphate dehydratase, found in Caldicellulosiruptor saccharolyticus (strain ATCC 43494 / DSM 8903 / Tp8T 6331).